A 168-amino-acid chain; its full sequence is MTATRTIGIDPGTARMGWGVVEETDGVLRLVDCGVLTTSAELSQAERLLLLYNELRHLIEQYHPAAAAIEELFFGKNVNTALTVGQARGVVLLTLAQAGIPVYEYKPLQVKQALAGYGGADKRQMQEMVRLTLRLPAIPRPDDAADAVAVAICHTYAAPMIRRIEEGR.

Active-site residues include Asp10, Glu70, and Asp143. Mg(2+) is bound by residues Asp10, Glu70, and Asp143.

The protein belongs to the RuvC family. In terms of assembly, homodimer which binds Holliday junction (HJ) DNA. The HJ becomes 2-fold symmetrical on binding to RuvC with unstacked arms; it has a different conformation from HJ DNA in complex with RuvA. In the full resolvosome a probable DNA-RuvA(4)-RuvB(12)-RuvC(2) complex forms which resolves the HJ. Requires Mg(2+) as cofactor.

The protein localises to the cytoplasm. The catalysed reaction is Endonucleolytic cleavage at a junction such as a reciprocal single-stranded crossover between two homologous DNA duplexes (Holliday junction).. Its function is as follows. The RuvA-RuvB-RuvC complex processes Holliday junction (HJ) DNA during genetic recombination and DNA repair. Endonuclease that resolves HJ intermediates. Cleaves cruciform DNA by making single-stranded nicks across the HJ at symmetrical positions within the homologous arms, yielding a 5'-phosphate and a 3'-hydroxyl group; requires a central core of homology in the junction. The consensus cleavage sequence is 5'-(A/T)TT(C/G)-3'. Cleavage occurs on the 3'-side of the TT dinucleotide at the point of strand exchange. HJ branch migration catalyzed by RuvA-RuvB allows RuvC to scan DNA until it finds its consensus sequence, where it cleaves and resolves the cruciform DNA. The polypeptide is Crossover junction endodeoxyribonuclease RuvC (Roseiflexus sp. (strain RS-1)).